The chain runs to 301 residues: Formylmethanofuran--tetrahydromethanopterin formyltransferase (301 aa).

The protein belongs to the FTR family. In terms of assembly, homotetramer.

The protein localises to the cytoplasm. The enzyme catalyses N-formylmethanofuran + 5,6,7,8-tetrahydromethanopterin + H(+) = N(5)-formyl-5,6,7,8-tetrahydromethanopterin + methanofuran. It functions in the pathway one-carbon metabolism; methanogenesis from CO(2); 5,10-methenyl-5,6,7,8-tetrahydromethanopterin from CO(2): step 2/3. Catalyzes the reversible transfer of a formyl group from formylmethanofuran (formyl-MFR) to tetrahydromethanopterin (H(4)MPT) to produce 5-formyl tetrahydromethanopterin (5-formyl-H(4)MPT) and methanofuran (MFR). The protein is Formylmethanofuran--tetrahydromethanopterin formyltransferase of Methanocaldococcus jannaschii (strain ATCC 43067 / DSM 2661 / JAL-1 / JCM 10045 / NBRC 100440) (Methanococcus jannaschii).